Consider the following 1226-residue polypeptide: Methionine synthase (1226 aa).

In terms of domain architecture, Hcy-binding spans arginine 6 to valine 326. Zn(2+)-binding residues include cysteine 248, cysteine 311, and cysteine 312. The 262-residue stretch at phenylalanine 357 to glutamate 618 folds into the Pterin-binding domain. Residues serine 651 to serine 745 enclose the B12-binding N-terminal domain. Methylcob(III)alamin-binding positions include glutamate 695, glycine 757–aspartate 761, histidine 760, serine 805, threonine 809, and alanine 861. One can recognise a B12-binding domain in the interval asparagine 747 to glutamate 882. The AdoMet activation domain maps to lysine 898–glycine 1226. S-adenosyl-L-methionine is bound by residues aspartate 948, arginine 1136, and tyrosine 1191 to phenylalanine 1192.

It belongs to the vitamin-B12 dependent methionine synthase family. Methylcob(III)alamin serves as cofactor. Zn(2+) is required as a cofactor.

The catalysed reaction is (6S)-5-methyl-5,6,7,8-tetrahydrofolate + L-homocysteine = (6S)-5,6,7,8-tetrahydrofolate + L-methionine. Its pathway is amino-acid biosynthesis; L-methionine biosynthesis via de novo pathway; L-methionine from L-homocysteine (MetH route): step 1/1. Functionally, catalyzes the transfer of a methyl group from methyl-cobalamin to homocysteine, yielding enzyme-bound cob(I)alamin and methionine. Subsequently, remethylates the cofactor using methyltetrahydrofolate. The chain is Methionine synthase (metH) from Vibrio parahaemolyticus serotype O3:K6 (strain RIMD 2210633).